A 334-amino-acid polypeptide reads, in one-letter code: Formylmethanofuran--tetrahydromethanopterin formyltransferase (334 aa).

Belongs to the FTR family. Homotetramer.

The protein resides in the cytoplasm. It catalyses the reaction N-formylmethanofuran + 5,6,7,8-tetrahydromethanopterin + H(+) = N(5)-formyl-5,6,7,8-tetrahydromethanopterin + methanofuran. It functions in the pathway one-carbon metabolism; formaldehyde degradation; formate from formaldehyde (H(4)MPT route): step 4/5. Catalyzes the transfer of a formyl group from 5-formyl tetrahydromethanopterin (5-formyl-H(4)MPT) to methanofuran (MFR) to produce formylmethanofuran (formyl-MFR) and tetrahydromethanopterin (H(4)MPT). This chain is Formylmethanofuran--tetrahydromethanopterin formyltransferase, found in Rhodopirellula baltica (strain DSM 10527 / NCIMB 13988 / SH1).